Consider the following 164-residue polypeptide: B-phycoerythrin alpha chain (164 aa).

Residues cysteine 82 and cysteine 139 each contribute to the (2R,3E)-phycoerythrobilin site.

This sequence belongs to the phycobiliprotein family. Heteromer of 6 alpha, 6 beta and one gamma chain. Contains two covalently linked bilin chromophores.

It is found in the plastid. Its subcellular location is the chloroplast thylakoid membrane. Its function is as follows. Light-harvesting photosynthetic bile pigment-protein from the phycobiliprotein complex. The polypeptide is B-phycoerythrin alpha chain (cpeA) (Porphyridium sordidum (Red alga)).